We begin with the raw amino-acid sequence, 92 residues long: Large ribosomal subunit protein bL27 (92 aa).

A disordered region spans residues 1 to 20; it reads MAHKKAGGSTRNGRDSNPKY.

It belongs to the bacterial ribosomal protein bL27 family.

This chain is Large ribosomal subunit protein bL27, found in Legionella pneumophila (strain Paris).